Consider the following 209-residue polypeptide: Regulator of G-protein signaling 1 (209 aa).

The segment at 19-42 is disordered; sequence FSASPKDSKEHSHSLLDDKKQKKR. A compositionally biased stretch (basic and acidic residues) spans 24–38; the sequence is KDSKEHSHSLLDDKK. Residues 85–200 form the RGS domain; the sequence is SLEKLLANQT…LKSNIYLNLL (116 aa).

As to quaternary structure, interacts with GNAI1 and GNAQ. As to expression, detected in spleen, lymph node and intestine.

It is found in the cell membrane. Its subcellular location is the cytoplasm. The protein resides in the cytosol. Regulates G protein-coupled receptor signaling cascades, including signaling downstream of the N-formylpeptide chemoattractant receptors and leukotriene receptors. Inhibits B cell chemotaxis toward CXCL12. Inhibits signal transduction by increasing the GTPase activity of G protein alpha subunits thereby driving them into their inactive GDP-bound form. This Mus musculus (Mouse) protein is Regulator of G-protein signaling 1 (Rgs1).